We begin with the raw amino-acid sequence, 437 residues long: GTPase Era, mitochondrial (437 aa).

Residues 1-43 constitute a mitochondrion transit peptide; sequence MAAPSWRGARLVQSVLRVWQVGPHVARERVIPFSSLLGFQRRC. The region spanning 112-330 is the Era-type G domain; it reads RVLRVVLLGA…QYLLTQAQPG (219 aa). Residues 120–127 form a G1 region; it reads GAPNAGKS. 120-127 lines the GTP pocket; that stretch reads GAPNAGKS. The G2 stretch occupies residues 146 to 150; that stretch reads HTTRC. The interval 167 to 170 is G3; the sequence is DTPG. GTP is bound at residue 167–171; sequence DTPGI. Serine 173 is subject to Phosphoserine. GTP is bound at residue 236 to 239; it reads NKVD. A G4 region spans residues 236–239; the sequence is NKVD. Positions 271–290 are disordered; it reads HSHPGTHCPSPAVKDPNTQS. The interval 308–310 is G5; sequence LSA. The 78-residue stretch at 360 to 437 folds into the KH type-2 domain; it reads LPQEVPYNVQ…DIRLSVKLLK (78 aa).

This sequence belongs to the TRAFAC class TrmE-Era-EngA-EngB-Septin-like GTPase superfamily. Era GTPase family.

The protein localises to the mitochondrion matrix. It localises to the mitochondrion inner membrane. Its function is as follows. Probable GTPase that plays a role in the mitochondrial ribosomal small subunit assembly. Specifically binds the 12S mitochondrial rRNA (12S mt-rRNA) to a 33 nucleotide section delineating the 3' terminal stem-loop region. May act as a chaperone that protects the 12S mt-rRNA on the 28S mitoribosomal subunit during ribosomal small subunit assembly. The sequence is that of GTPase Era, mitochondrial (ERAL1) from Homo sapiens (Human).